The primary structure comprises 450 residues: Probable ECA polymerase (450 aa).

11 helical membrane-spanning segments follow: residues 6–26 (FSGLLVVWLLSTLFIATLTWF), 37–57 (VFFSLLFLLTFFFGFPLTSVL), 63–83 (VGVAPPEILLQALLSAACFYA), 120–140 (LMGIALVSVGIFFMHNGFLLF), 155–175 (GVALKRFFYFFIPAMLVIYFL), 181–201 (AWLFFLVSTVAFGLLTYMIVG), 207–227 (IIIAFAIFLFIGIIRGWISLW), 228–248 (MLVAAGVLGIVGMFWLALKRY), 341–361 (LVVMGGALFIPLGAVAVGLII), 378–398 (YKAAILHSFCFGAIFNMIVLA), and 410–430 (VFFLVIFGACLLVAKLLFWLF).

Belongs to the WzyE family. In terms of assembly, probably part of a complex composed of WzxE, WzyE and WzzE.

It localises to the cell inner membrane. It functions in the pathway bacterial outer membrane biogenesis; enterobacterial common antigen biosynthesis. Functionally, probably involved in the polymerization of enterobacterial common antigen (ECA) trisaccharide repeat units. The protein is Probable ECA polymerase of Citrobacter koseri (strain ATCC BAA-895 / CDC 4225-83 / SGSC4696).